Reading from the N-terminus, the 79-residue chain is MANNLGLVILLLVIVLVSCSKSSDCALASPQKSRPSSEWRRKLIPVRSSRSPRSPSFAPKKPPPPPPSPPLSPSSPPSN.

A signal peptide spans 1–19 (MANNLGLVILLLVIVLVSC). Positions 25 to 79 (CALASPQKSRPSSEWRRKLIPVRSSRSPRSPSFAPKKPPPPPPSPPLSPSSPPSN) are disordered. The SCOOP motif motif lies at 45 to 57 (PVRSSRSPRSPSF). Residues 45–59 (PVRSSRSPRSPSFAP) are compositionally biased toward low complexity. Residues 49–51 (SRS) carry the SxS motif essential for MIK2 binding motif. Residues 60–79 (KKPPPPPPSPPLSPSSPPSN) show a composition bias toward pro residues.

It belongs to the serine rich endogenous peptide (SCOOP) phytocytokine family. Interacts with MIK2 (via extracellular leucine-rich repeat domain); this interaction triggers the formation of complex between MIK2 and the BAK1/SERK3 and SERK4 coreceptors, and subsequent BAK1 activation by phosphorylation.

The protein resides in the cell membrane. The protein localises to the secreted. It is found in the extracellular space. Its subcellular location is the apoplast. In terms of biological role, brassicaceae-specific phytocytokine (plant endogenous peptide released into the apoplast) perceived by MIK2 in a BAK1/SERK3 and SERK4 coreceptors-dependent manner, that modulates various physiological and antimicrobial processes including growth prevention and reactive oxygen species (ROS) response regulation. In Arabidopsis thaliana (Mouse-ear cress), this protein is Serine rich endogenous peptide 2.